The chain runs to 538 residues: Chaperonin GroEL (538 aa).

ATP-binding positions include 30–33 (TLGP), 87–91 (DGTTT), G415, 479–481 (DAA), and D495.

It belongs to the chaperonin (HSP60) family. As to quaternary structure, forms a cylinder of 14 subunits composed of two heptameric rings stacked back-to-back. Interacts with the co-chaperonin GroES.

Its subcellular location is the cytoplasm. The catalysed reaction is ATP + H2O + a folded polypeptide = ADP + phosphate + an unfolded polypeptide.. In terms of biological role, together with its co-chaperonin GroES, plays an essential role in assisting protein folding. The GroEL-GroES system forms a nano-cage that allows encapsulation of the non-native substrate proteins and provides a physical environment optimized to promote and accelerate protein folding. The sequence is that of Chaperonin GroEL from Dictyoglomus turgidum (strain DSM 6724 / Z-1310).